Consider the following 520-residue polypeptide: Peptide chain release factor 3 (520 aa).

Residues 8 to 277 (ESRKTFAIIS…FAPMPNARQT (270 aa)) enclose the tr-type G domain. GTP-binding positions include 17–24 (SHPDAGKT), 85–89 (DTPGH), and 139–142 (NKLD).

The protein belongs to the TRAFAC class translation factor GTPase superfamily. Classic translation factor GTPase family. PrfC subfamily.

It localises to the cytoplasm. In terms of biological role, increases the formation of ribosomal termination complexes and stimulates activities of RF-1 and RF-2. It binds guanine nucleotides and has strong preference for UGA stop codons. It may interact directly with the ribosome. The stimulation of RF-1 and RF-2 is significantly reduced by GTP and GDP, but not by GMP. This chain is Peptide chain release factor 3, found in Staphylococcus aureus (strain USA300 / TCH1516).